We begin with the raw amino-acid sequence, 164 residues long: T-cell surface glycoprotein CD3 zeta chain (164 aa).

An N-terminal signal peptide occupies residues methionine 1 to alanine 21. Glutamine 22 is subject to Blocked amino end (Gln). Topologically, residues glutamine 22–lysine 30 are extracellular. Residues leucine 31–leucine 51 traverse the membrane as a helical segment. The Cytoplasmic portion of the chain corresponds to arginine 52–arginine 164. At serine 58 the chain carries Phosphoserine. ITAM domains lie at threonine 61–lysine 89, glutamine 100–threonine 128, and glutamate 131–glutamine 159. A phosphotyrosine mark is found at tyrosine 72 and tyrosine 83. A compositionally biased stretch (basic and acidic residues) spans glutamate 87–methionine 96. Residues glutamate 87–tyrosine 111 are disordered. 4 positions are modified to phosphotyrosine: tyrosine 111, tyrosine 123, tyrosine 142, and tyrosine 153. Residues serine 124–glutamine 143 are disordered.

It belongs to the CD3Z/FCER1G family. The TCR-CD3 complex is composed of a CD3D/CD3E and a CD3G/CD3E heterodimers that preferentially associate with TCRalpha and TCRbeta, respectively, to form TCRalpha/CD3E/CD3G and TCRbeta/CD3G/CD3E trimers. In turn, the hexamer interacts with CD3Z homodimer to form the TCR-CD3 complex. Alternatively, TCRalpha and TCRbeta can be replaced by TCRgamma and TCRdelta. Interacts with SLA. Interacts with SLA2. Interacts with TRAT1. Interacts with DOCK2. Interacts with SHB. Interacts with ZAP70. Interacts (tyrosine phosphorylated) with SHC1 (via SH2 domain). Interacts with PTPRC. Interacts with CRK; this interaction regulates CD3Z phosphorylation. Interacts (on T cell side) with CD81, ICAM1 and CD9 at immunological synapses between antigen-presenting cells and T cells. Interacts with CD160. Interacts with LY6E. Interacts with LY6E. The signaling subunit of immunoglobulin gamma (IgG) Fc receptor complex. As a homodimer or a heterodimer with FCER1G, associates with the ligand binding subunit FCGR3A (via transmembrane domain); this interaction is a prerequisite for Fc receptor complex expression on the cell surface. Interacts with CD5. In terms of processing, phosphorylated on Tyr residues after T-cell receptor triggering by LCK in association with CD4/CD8. In terms of tissue distribution, CD3Z is expressed in normal lymphoid tissue and in peripheral blood mononuclear cells (PBMCs). Expressed also in retinal ganglion cells.

The protein localises to the cell membrane. Part of the TCR-CD3 complex present on T-lymphocyte cell surface that plays an essential role in adaptive immune response. When antigen presenting cells (APCs) activate T-cell receptor (TCR), TCR-mediated signals are transmitted across the cell membrane by the CD3 chains CD3D, CD3E, CD3G and CD3Z. All CD3 chains contain immunoreceptor tyrosine-based activation motifs (ITAMs) in their cytoplasmic domain. Upon TCR engagement, these motifs become phosphorylated by Src family protein tyrosine kinases LCK and FYN, resulting in the activation of downstream signaling pathways. CD3Z ITAMs phosphorylation creates multiple docking sites for the protein kinase ZAP70 leading to ZAP70 phosphorylation and its conversion into a catalytically active enzyme. Plays an important role in intrathymic T-cell differentiation. Additionally, participates in the activity-dependent synapse formation of retinal ganglion cells (RGCs) in both the retina and dorsal lateral geniculate nucleus (dLGN). The sequence is that of T-cell surface glycoprotein CD3 zeta chain (Cd247) from Mus musculus (Mouse).